Here is a 188-residue protein sequence, read N- to C-terminus: Pyridoxal 5'-phosphate synthase subunit PdxT (188 aa).

46–48 serves as a coordination point for L-glutamine; it reads GES. C78 functions as the Nucleophile in the catalytic mechanism. Residues R105 and 134-135 contribute to the L-glutamine site; that span reads IR. Active-site charge relay system residues include H170 and E172.

This sequence belongs to the glutaminase PdxT/SNO family. As to quaternary structure, in the presence of PdxS, forms a dodecamer of heterodimers. Only shows activity in the heterodimer.

The enzyme catalyses aldehydo-D-ribose 5-phosphate + D-glyceraldehyde 3-phosphate + L-glutamine = pyridoxal 5'-phosphate + L-glutamate + phosphate + 3 H2O + H(+). The catalysed reaction is L-glutamine + H2O = L-glutamate + NH4(+). The protein operates within cofactor biosynthesis; pyridoxal 5'-phosphate biosynthesis. Catalyzes the hydrolysis of glutamine to glutamate and ammonia as part of the biosynthesis of pyridoxal 5'-phosphate. The resulting ammonia molecule is channeled to the active site of PdxS. The chain is Pyridoxal 5'-phosphate synthase subunit PdxT from Thermotoga neapolitana (strain ATCC 49049 / DSM 4359 / NBRC 107923 / NS-E).